We begin with the raw amino-acid sequence, 274 residues long: Thiamine kinase (274 aa).

This sequence belongs to the thiamine kinase family.

It catalyses the reaction thiamine + ATP = thiamine phosphate + ADP + H(+). It participates in cofactor biosynthesis; thiamine diphosphate biosynthesis; thiamine phosphate from thiamine: step 1/1. In terms of biological role, catalyzes the ATP-dependent phosphorylation of thiamine to thiamine phosphate. Is involved in thiamine salvage. In Escherichia coli O6:K15:H31 (strain 536 / UPEC), this protein is Thiamine kinase.